We begin with the raw amino-acid sequence, 570 residues long: Proline--tRNA ligase (570 aa).

The protein belongs to the class-II aminoacyl-tRNA synthetase family. ProS type 1 subfamily. Homodimer.

Its subcellular location is the cytoplasm. It carries out the reaction tRNA(Pro) + L-proline + ATP = L-prolyl-tRNA(Pro) + AMP + diphosphate. Catalyzes the attachment of proline to tRNA(Pro) in a two-step reaction: proline is first activated by ATP to form Pro-AMP and then transferred to the acceptor end of tRNA(Pro). As ProRS can inadvertently accommodate and process non-cognate amino acids such as alanine and cysteine, to avoid such errors it has two additional distinct editing activities against alanine. One activity is designated as 'pretransfer' editing and involves the tRNA(Pro)-independent hydrolysis of activated Ala-AMP. The other activity is designated 'posttransfer' editing and involves deacylation of mischarged Ala-tRNA(Pro). The misacylated Cys-tRNA(Pro) is not edited by ProRS. This is Proline--tRNA ligase from Neisseria meningitidis serogroup A / serotype 4A (strain DSM 15465 / Z2491).